The primary structure comprises 732 residues: E3 ubiquitin-protein ligase RNF19B (732 aa).

The disordered stretch occupies residues 1-109; sequence MGSEKDSESP…PEEDEAAEGG (109 aa). A required for ubiquitin ligase activity and for protection against staurosporin-induced cell death region spans residues 1–315; it reads MGSEKDSESP…VCGCEFCWLC (315 aa). Pro residues predominate over residues 54-71; it reads AEPPPPAAPPPPPPPAPA. Low complexity predominate over residues 72–99; the sequence is PVEAQAPPVEALPSEPAAEAEAEAVAAG. Positions 100–109 are enriched in acidic residues; that stretch reads PEEDEAAEGG. The interval 112–334 is TRIAD supradomain; the sequence is EEVECPLCLV…LSPSGCTFWG (223 aa). Positions 116, 119, 139, 142, 203, 208, 225, 230, 235, 238, 243, 248, 284, and 287 each coordinate Zn(2+). Residues 116 to 165 form an RING-type 1 zinc finger; it reads CPLCLVRLPPERAPRLLSCPHRSCRDCLRHYLRLEISESRVPISCPECSE. Residues 183–248 form an IBR-type zinc finger; sequence HKYEEFMLRR…KQIWHPNQTC (66 aa). Residues 284–315 form an RING-type 2; atypical zinc finger; it reads CPRCSAYIIKMNDGSCNHMTCAVCGCEFCWLC. Cys-299 is an active-site residue. Positions 304, 307, 312, 315, 323, and 330 each coordinate Zn(2+). Helical transmembrane passes span 351–371 and 412–432; these read LIGAPVGISLIAGIAIPAMVI and VIAAVSVGIGVPIMLAYVYGV. 2 disordered regions span residues 598–644 and 660–732; these read QLVS…QSCE and QPES…YEVE. Acidic residues predominate over residues 674–683; sequence QSDDVPDITS.

It belongs to the RBR family. RNF19 subfamily. In terms of assembly, interacts with UBE2L3, UBE2L6 and UCKL1. In terms of tissue distribution, expressed specifically in natural killer cells, activated macrophages and cytotoxic T-cells. Present in macrophages (at protein level). Ubiquitously expressed with high expression in testis.

The protein resides in the cytoplasmic granule membrane. The protein localises to the endoplasmic reticulum membrane. It catalyses the reaction [E2 ubiquitin-conjugating enzyme]-S-ubiquitinyl-L-cysteine + [acceptor protein]-L-lysine = [E2 ubiquitin-conjugating enzyme]-L-cysteine + [acceptor protein]-N(6)-ubiquitinyl-L-lysine.. It functions in the pathway protein modification; protein ubiquitination. Its function is as follows. E3 ubiquitin-protein ligase which accepts ubiquitin from E2 ubiquitin-conjugating enzymes UBE2L3 and UBE2L6 in the form of a thioester and then directly transfers the ubiquitin to targeted substrates, such as UCKL1. Involved in the cytolytic activity of natural killer cells and cytotoxic T-cells. Protects against staurosporin-induced cell death. This Mus musculus (Mouse) protein is E3 ubiquitin-protein ligase RNF19B (Rnf19b).